The primary structure comprises 209 residues: Molybdenum cofactor guanylyltransferase (209 aa).

GTP-binding positions include 13 to 15, lysine 26, asparagine 54, aspartate 74, and aspartate 104; that span reads LAG. Aspartate 104 provides a ligand contact to Mg(2+).

This sequence belongs to the MobA family. In terms of assembly, monomer. Mg(2+) is required as a cofactor.

The protein localises to the cytoplasm. The catalysed reaction is Mo-molybdopterin + GTP + H(+) = Mo-molybdopterin guanine dinucleotide + diphosphate. Its function is as follows. Transfers a GMP moiety from GTP to Mo-molybdopterin (Mo-MPT) cofactor (Moco or molybdenum cofactor) to form Mo-molybdopterin guanine dinucleotide (Mo-MGD) cofactor. The protein is Molybdenum cofactor guanylyltransferase of Acinetobacter baumannii (strain ACICU).